The chain runs to 747 residues: Protein Niban 2 (747 aa).

Residue glycine 2 is the site of N-myristoyl glycine attachment. The region spanning 68-192 is the PH domain; sequence RIIFSGNLFQ…WQAVLQDCVR (125 aa). Residues serine 568 and serine 574 each carry the phosphoserine modification. Positions 589–747 are disordered; sequence WGEQYGDGGD…EDSAGVQTEF (159 aa). Over residues 593–602 the composition is skewed to gly residues; the sequence is YGDGGDGSDS. Residues serine 605, serine 626, serine 641, serine 645, serine 648, serine 667, serine 672, serine 683, serine 693, and serine 697 each carry the phosphoserine modification. Over residues 708–722 the composition is skewed to basic and acidic residues; it reads VDLEPPKPSDQETGE. A compositionally biased stretch (polar residues) spans 734 to 747; the sequence is HTTTEDSAGVQTEF.

Belongs to the Niban family. In terms of processing, as apoptosis proceeds, degraded via an proteasome-independent pathway, probably by caspases.

The protein resides in the cytoplasm. It is found in the cytosol. Its subcellular location is the cell junction. It localises to the adherens junction. The protein localises to the membrane. Its function is as follows. May play a role in apoptosis suppression. In Rattus norvegicus (Rat), this protein is Protein Niban 2.